Reading from the N-terminus, the 192-residue chain is Ion-translocating oxidoreductase complex subunit A (192 aa).

Transmembrane regions (helical) follow at residues 5 to 25, 39 to 59, 72 to 92, 102 to 122, 134 to 154, and 171 to 191; these read LLLLIGTVLVNNFVLVKFLGL, IGMSMATTFVLTLASVLSFLV, LRTMSFILVIAVVVQFTEMLV, ALGIYLPLITTNCAVLGVALL, AIYGFGAAVGFSLVLILFSAM, and AIAMITAGLMSLAFMGFTGLV.

The protein belongs to the NqrDE/RnfAE family. In terms of assembly, the complex is composed of six subunits: RnfA, RnfB, RnfC, RnfD, RnfE and RnfG.

The protein localises to the cell inner membrane. Functionally, part of a membrane-bound complex that couples electron transfer with translocation of ions across the membrane. This is Ion-translocating oxidoreductase complex subunit A from Shewanella amazonensis (strain ATCC BAA-1098 / SB2B).